The primary structure comprises 158 residues: SsrA-binding protein (158 aa).

Belongs to the SmpB family.

The protein resides in the cytoplasm. Functionally, required for rescue of stalled ribosomes mediated by trans-translation. Binds to transfer-messenger RNA (tmRNA), required for stable association of tmRNA with ribosomes. tmRNA and SmpB together mimic tRNA shape, replacing the anticodon stem-loop with SmpB. tmRNA is encoded by the ssrA gene; the 2 termini fold to resemble tRNA(Ala) and it encodes a 'tag peptide', a short internal open reading frame. During trans-translation Ala-aminoacylated tmRNA acts like a tRNA, entering the A-site of stalled ribosomes, displacing the stalled mRNA. The ribosome then switches to translate the ORF on the tmRNA; the nascent peptide is terminated with the 'tag peptide' encoded by the tmRNA and targeted for degradation. The ribosome is freed to recommence translation, which seems to be the essential function of trans-translation. The chain is SsrA-binding protein from Glaesserella parasuis serovar 5 (strain SH0165) (Haemophilus parasuis).